We begin with the raw amino-acid sequence, 287 residues long: Elongation factor Ts (287 aa).

The segment at 80–83 is involved in Mg(2+) ion dislocation from EF-Tu; sequence TDFL.

This sequence belongs to the EF-Ts family.

It is found in the cytoplasm. Its function is as follows. Associates with the EF-Tu.GDP complex and induces the exchange of GDP to GTP. It remains bound to the aminoacyl-tRNA.EF-Tu.GTP complex up to the GTP hydrolysis stage on the ribosome. This chain is Elongation factor Ts, found in Pseudomonas putida (strain ATCC 700007 / DSM 6899 / JCM 31910 / BCRC 17059 / LMG 24140 / F1).